The chain runs to 797 residues: LPS-assembly protein LptD (797 aa).

The first 20 residues, 1–20 (MHTIRCLILSALSVAGAAQA), serve as a signal peptide directing secretion. The disordered stretch occupies residues 23–45 (SQDAAPAGRQPVGSVASPGLEMP).

This sequence belongs to the LptD family. In terms of assembly, component of the lipopolysaccharide transport and assembly complex. Interacts with LptE and LptA.

The protein resides in the cell outer membrane. Functionally, together with LptE, is involved in the assembly of lipopolysaccharide (LPS) at the surface of the outer membrane. In Bordetella avium (strain 197N), this protein is LPS-assembly protein LptD.